The chain runs to 1562 residues: Pikromycin polyketide synthase component PikAIII (1562 aa).

The 431-residue stretch at H34 to E464 folds into the Ketosynthase family 3 (KS3) domain. Positions V37–H1475 are module 5. C209 (acyl-thioester intermediate; for beta-ketoacyl synthase activity) is an active-site residue. Active-site for beta-ketoacyl synthase activity residues include H344 and H384. The interval F565–L866 is acyltransferase. The active-site Acyl-ester intermediate; for acyltransferase activity is the S655. The segment at G1116–A1293 is beta-ketoacyl reductase. NADP(+)-binding positions include T1124–L1127, S1147–G1150, D1176–V1177, K1226, and Y1248–S1249. Residue Y1263 is the Acyl-ester intermediate; for beta-ketoacyl reductase activity of the active site. The region spanning P1403–Y1478 is the Carrier domain. O-(pantetheine 4'-phosphoryl)serine is present on S1438. The disordered stretch occupies residues G1519–D1548. The span at G1532–E1541 shows a compositional bias: low complexity.

In terms of assembly, homodimer. Pikromycin PKS consists of a combination of multimodular (PikAI and PikAII) and monomodular (PikAIII and PikAIV) polypeptides each coding for a functional synthase subunit which participates in 1 (monomodular) or 2 (multimodular) of the six FAS-like elongation steps required for formation of the polyketide. Module 1, 2, 3, 4, 5, and 6 participating in biosynthesis steps 1, 2, 3, 4, 5, and 6, respectively. Pantetheine 4'-phosphate serves as cofactor.

The enzyme catalyses 5 (S)-methylmalonyl-CoA + malonyl-CoA + 5 NADPH + 11 H(+) = 10-deoxymethynolide + 6 CO2 + 5 NADP(+) + 6 CoA + 2 H2O. It catalyses the reaction 6 (S)-methylmalonyl-CoA + malonyl-CoA + 5 NADPH + 12 H(+) = narbonolide + 7 CO2 + 5 NADP(+) + 7 CoA + 2 H2O. It participates in antibiotic biosynthesis. Functionally, involved in the biosynthesis of 12- and 14-membered ring macrolactone antibiotics such as methymycin and neomethymycin, and pikromycin and narbomycin, respectively. Component of the pikromycin PKS which catalyzes the biosynthesis of both precursors 10-deoxymethynolide (12-membered ring macrolactone) and narbonolide (14-membered ring macrolactone). Chain elongation through PikAI, PikAII and PikAIII followed by thioesterase catalyzed termination results in the production of 10-deoxymethynolide, while continued elongation through PikAIV, followed by thioesterase (TE) catalyzed cyclization results in the biosynthesis of the narbonolide. The chain is Pikromycin polyketide synthase component PikAIII from Streptomyces venezuelae.